Reading from the N-terminus, the 1192-residue chain is MQIQKMFEKEINRDIKGVIKVGQDDDKNIYQELDEYVVTNELLHHMGEFFKSYKKGITGHTDKMGVWISGFFGSGKSHFLKILSYLLENKHVMDENEINKDAISFFNNKILDPMVLADMKLAGNTTTDVILFNIDSKSESDSKSDKNAIVKVFNKVFNEMQGFCGSIPWIADLERQMVKDGRYEEFKAEFEKISGNTWEEAREDFYYEEDSIIEALSKTTKMSEDAARNWYERAEEDYFISIDRFAKRVREYVEAKGNNHHVVFLIDELGQYIGNDSQLMLNLQTVVEDIGTQCGGKVWVLVTSQQDIDSVVKVNGNDFSKIQGRFDTRLSLSSAHVDEVIKKRILLKNEVGKQTLRLLYGDNSSILKNLITFSGDTAEMKIFNNEEDFVDVYPFIPYQFNLLQKVFTGIRIHGASGKHLAEGERSLLSAFQESAMKYAESETGALIPFSAFYQTIEAFLDSSIRTVIIHAQNNSRLNAYDVEVLKLLFLIKYVKELPANLENLATLMIQNISDDKIELKKKIESSLIRLSKETLIQKNGQEYIFLTNDEQDVNREIKNMHVDSAEVIQKIGDVIFNVVYQDKKYRYSPKYHFSFNTIIDDRPIGMQTNDIGLKIITPYFDATTELNDSELKMMSMRESNVILKLPQDTSYLDEMTEILRIQAYLKIKSGTAASQAIEDIKVRKSREANERKDRVHIYITEALKHAQIFVNSQQLDVKEKNPVERINDAFKVLIDNLYNKLHYVKKFIDTAKQLNELLVENTTQLTLSDDNEDANQLAVKEVNDYITRLTTRNQQITIKGITTHFTKQPYGWKDLDIASFIIKLFKGQEIKLQLNSSNLTTSERDLVNYITKRDYVERVVVKKRERISPALMKVVKDLSKEVFEVTALPDDEDGLMNRFKELLVSEKNKINVLLVQYRNTFYPGQDVLQDGKESIEQLLNISDTTSFYNKVKQLQNDFLDYAEDVEPVKAFFETQRDIYDDAVKRLNIFEKNQTYVTDQKVTGFIESISKIVKHKEPYKNIHQLPGLIKEFDELFVELLEKECEPVKNVIESDYQTVLEELNKHEEIKSMFFNKFKNSFDGIKDRLNRVNNFYEAIAMQTESDRLKVRCIDDIANEVERRKPPVTSPCTGTTCTTVIDPIVEYKAKKKTISKNTILRGTKTIENEEDIEAVLDEIRKQLQKELEDASVIKLV.

The protein belongs to the BrxC family.

In terms of biological role, BREX systems (bacteriophage exclusion) provide immunity against bacteriophage. A core protein of a type 1 BREX system. This system allows phage adsorption but prevents phage DNA replication, without degradation of the phage DNA. Methylation of bacterial DNA by PglX probably guides self/non-self discrimination. When the brxA-brxB-brxC-pglX and pglZ-brxL operons are transformed into a susceptible B.subtilis strain (BEST7003) they confer resistance to bacteriophages SPbeta, SP16, Zeta, phi3T and SP02 and partial protection to phages SP01 and SP82G (these include lytic and temperate phage). They do not protect against phages phi105, rho10 or rho14. Additionally confers a very slight reduction in efficiency of plasmid transformation. This Bacillus cereus (strain H3081.97) protein is Probable ATP-binding protein BrxC.